Consider the following 80-residue polypeptide: Small ribosomal subunit protein uS17c (80 aa).

It belongs to the universal ribosomal protein uS17 family. Part of the 30S ribosomal subunit.

The protein resides in the plastid. It localises to the chloroplast. Its function is as follows. One of the primary rRNA binding proteins, it binds specifically to the 5'-end of 16S ribosomal RNA. The sequence is that of Small ribosomal subunit protein uS17c (rps17) from Gracilaria tenuistipitata var. liui (Red alga).